Consider the following 1397-residue polypeptide: MDAYALPTYFPLAYSELQFLASRRAAAVAAAATVLPGSPCINQHHPTDVSSSVTVPSIIPTGGTSDSIKTSIQPQICNENTLLGNAGHQHNHQPQHVHNINVTGQPHDFHPAYRIPGYMEQLYSLQRTNSASSFHDPYVNCASAFHLAGLGLGSADFLGSRGLSSLGELHNAAVAAAAAGSLASTDFHFSVDGNRRLGSPRPPGGSIRASISRKRALSSSPYSDSFDINSMIRFSPNSLATIMNGSRGSSAASGSYGHISATALNPMSHVHSTRLQQIQAHLLRASAGLLNPMTPQQVAASGFSIGHMPTSASLRVNDVHPNLSDSHIQITTSPTVTKDVSQVPAAAFSLKNLDDAREKKGPFKDVVPEQPSSTSGGVAQVEADSASSQLSDRCYNNVVNNITGIPGDVKVNSRLDEYINCGSISIPSNEYDCANADTTDIKDEPGDFIETNCHWRSCRIEFITQDELVKHINNDHIQTNKKAFVCRWEDCTRGEKPFKAQYMLVVHMRRHTGEKPHKCTFEGCFKAYSRLENLKTHLRSHTGEKPYTCEYPGCSKAFSNASDRAKHQNRTHSNEKPYICKAPGCTKRYTDPSSLRKHVKTVHGAEFYANKKHKGLPLNDANSRLQQNNSRHNLQEHNIDSSPCSEDSHLGKMLGTSSPSIKSESDISSSNHHLVNGVRASDSLLTYSPDDLAENLNLDDGWNCDDDVDVADLPIVLRAMVNIGNGNASASTIGGSVLARQRFRGRLQTKGINSSTIMLCNIPESNRTFGISELNQRITELKMEPGTDAEIKIPKLPNTTIGGYTEDPLQNQTSFRNTVSNKQGTVSGSIQGQFRRDSQNSTASTYYGSMQSRRSSQSSQVSSIPTMRPNPSCNSTASFYDPISPGCSRRSSQMSNGANCNSFTSTSGLPVLNKESNKSLNACINKPNIGVQGVGIYNSSLPPPPSSHLIATNLKRLQRKDSEYHNFTSGRFSVPSYMHSLHIKNNKPVGENEFDKAIASNARRQTDPVPNINLDPLTNISRFSTTPHSFDINVGKTNNIASSINKDNLRKDLFTVSIKADMAMTSDQHPNERINLDEVEELILPDEMLQYLNLVKDDTNHLEKEHQAVPVGSNVSETIASNHYREQSNIYYTNKQILTPPSNVDIQPNTTKFTVQDKFAMTAVGGSFSQRELSTLAVPNEHGHAKCESFHHQSQKYMNTDIGSKQQSALPSAHQRQTEKSNYNQIIDSSMTSLPELNVDSIYPRNETENIFKVHGDHDNEIQCGIISQSQMSPSTNLNNDGQFSTVNMQPITTSKLFPPEPQKIVCDTQASNTSVMHLDTYQRTLEYVQSCQNWMETNNTSTNQIQSLPGMPVNNTLFPDVSSSTHPYHGTNMVINDMTTSLTSLLEENRYLQMMQ.

Positions 1 to 440 are interaction with RDX; that stretch reads MDAYALPTYF…YDCANADTTD (440 aa). 2 disordered regions span residues 193 to 212 and 361 to 383; these read GNRR…ASIS and GPFK…QVEA. 5 consecutive C2H2-type zinc fingers follow at residues 451-476, 484-511, 517-541, 547-572, and 578-603; these read TNCH…NNDH, FVCR…MRRH, HKCT…LRSH, YTCE…NRTH, and YICK…KTVH. Disordered stretches follow at residues 636–669 and 807–877; these read EHNI…DISS and DPLQ…NSTA. A compositionally biased stretch (low complexity) spans 657–669; it reads SSPSIKSESDISS. 2 stretches are compositionally biased toward polar residues: residues 807–832 and 839–848; these read DPLQ…SIQG and QNSTASTYYG. The segment covering 849 to 863 has biased composition (low complexity); it reads SMQSRRSSQSSQVSS. The interval 1161–1397 is interaction with RDX; sequence MTAVGGSFSQ…EENRYLQMMQ (237 aa).

This sequence belongs to the GLI C2H2-type zinc-finger protein family. In terms of assembly, interacts with RDX. Interacts with cos. Interacts with slmb; the interaction is enhanced by phosphorylation by CkIalpha and dco. Polyubiquitinated by RDX in the presence of CUL3, which results in proteasomal degradation. Post-translationally, phosphorylated on multiple sites by protein kinase A (PKA) and phosphorylation by PKA primes further phosphorylation by CK1 and GSK3. Phosphorylation is essential for its proteolytic processing. cos recruits multiple kinases to promote efficient phosphorylation of ci while Hh signaling inhibits phosphorylation by restricting the accessibility of ci to the kinases. Phosphorylation by CkIalpha and dco enhances binding to Slmb, the F-box recognition component of the SCF(slmb) E3 ubiquitin-protein ligase required for ci processing. In terms of processing, transcriptional repressor ciR, a C-terminally truncated form, is generated from the full-length ci (ciFL/ci-155) through proteolytic processing. Hh suppresses the formation of ci75 and promotes the conversion of ci155 into a transcriptional activator (ci155A).

The protein localises to the nucleus. Has a dual function as a transcriptional activator and a repressor of the hedgehog (Hh) pathway. The full-length ci form (ciFL), acts as an activator (ciA) while ciR, its C-terminally truncated form, acts as a repressor. Involved in segment polarity. Required for the normal development of the posterior half of each embryonic segment. Engrailed protein directly represses ci expression in posterior compartment cells. Essential component of a hh-signaling pathway which regulates the Duox-dependent gut immune response to bacterial uracil; required to activate Cad99C-dependent endosome formation, norpA-dependent Ca2+ mobilization and p38 MAPK, which are essential steps in the Duox-dependent production of reactive oxygen species (ROS) in response to intestinal bacterial infection. The sequence is that of Transcriptional activator cubitus interruptus (ci) from Drosophila melanogaster (Fruit fly).